We begin with the raw amino-acid sequence, 319 residues long: 4-hydroxy-3-methylbut-2-enyl diphosphate reductase (319 aa).

Residue Cys-17 coordinates [4Fe-4S] cluster. (2E)-4-hydroxy-3-methylbut-2-enyl diphosphate is bound by residues His-46 and His-79. Residues His-46 and His-79 each contribute to the dimethylallyl diphosphate site. Positions 46 and 79 each coordinate isopentenyl diphosphate. Cys-101 serves as a coordination point for [4Fe-4S] cluster. His-129 is a (2E)-4-hydroxy-3-methylbut-2-enyl diphosphate binding site. His-129 contributes to the dimethylallyl diphosphate binding site. Isopentenyl diphosphate is bound at residue His-129. Glu-131 acts as the Proton donor in catalysis. (2E)-4-hydroxy-3-methylbut-2-enyl diphosphate is bound at residue Thr-170. Cys-200 serves as a coordination point for [4Fe-4S] cluster. 4 residues coordinate (2E)-4-hydroxy-3-methylbut-2-enyl diphosphate: Ser-228, Ser-229, Asn-230, and Ser-273. Dimethylallyl diphosphate is bound by residues Ser-228, Ser-229, Asn-230, and Ser-273. Isopentenyl diphosphate is bound by residues Ser-228, Ser-229, Asn-230, and Ser-273.

Belongs to the IspH family. [4Fe-4S] cluster serves as cofactor.

The enzyme catalyses isopentenyl diphosphate + 2 oxidized [2Fe-2S]-[ferredoxin] + H2O = (2E)-4-hydroxy-3-methylbut-2-enyl diphosphate + 2 reduced [2Fe-2S]-[ferredoxin] + 2 H(+). It carries out the reaction dimethylallyl diphosphate + 2 oxidized [2Fe-2S]-[ferredoxin] + H2O = (2E)-4-hydroxy-3-methylbut-2-enyl diphosphate + 2 reduced [2Fe-2S]-[ferredoxin] + 2 H(+). Its pathway is isoprenoid biosynthesis; dimethylallyl diphosphate biosynthesis; dimethylallyl diphosphate from (2E)-4-hydroxy-3-methylbutenyl diphosphate: step 1/1. It functions in the pathway isoprenoid biosynthesis; isopentenyl diphosphate biosynthesis via DXP pathway; isopentenyl diphosphate from 1-deoxy-D-xylulose 5-phosphate: step 6/6. In terms of biological role, catalyzes the conversion of 1-hydroxy-2-methyl-2-(E)-butenyl 4-diphosphate (HMBPP) into a mixture of isopentenyl diphosphate (IPP) and dimethylallyl diphosphate (DMAPP). Acts in the terminal step of the DOXP/MEP pathway for isoprenoid precursor biosynthesis. This chain is 4-hydroxy-3-methylbut-2-enyl diphosphate reductase, found in Cereibacter sphaeroides (strain ATCC 17023 / DSM 158 / JCM 6121 / CCUG 31486 / LMG 2827 / NBRC 12203 / NCIMB 8253 / ATH 2.4.1.) (Rhodobacter sphaeroides).